A 437-amino-acid polypeptide reads, in one-letter code: GTPase Der (437 aa).

EngA-type G domains lie at 3–168 (PLIA…PETE) and 178–353 (IQLA…QNRS). GTP-binding positions include 9–16 (GRPNVGKS), 56–60 (DTGGY), 120–123 (NKVE), 184–191 (GRPNVGKS), 231–235 (DTAGL), and 296–299 (NKWD). The KH-like domain maps to 354–437 (RKISTSVLNK…VPISMRFMQK (84 aa)).

The protein belongs to the TRAFAC class TrmE-Era-EngA-EngB-Septin-like GTPase superfamily. EngA (Der) GTPase family. Associates with the 50S ribosomal subunit.

GTPase that plays an essential role in the late steps of ribosome biogenesis. The protein is GTPase Der of Pelodictyon phaeoclathratiforme (strain DSM 5477 / BU-1).